We begin with the raw amino-acid sequence, 467 residues long: MAPKLLLLLCLFSGLHARSRKVEEDEYEDSSSNQKWVLAPKSQDTDVTLILNKLLREYDKKLRPDIGIKPTVIDVDIYVNSIGPVSSINMEYQIDIFFAQTWTDSRLRFNSTMKILTLNSNMVGLIWIPDTIFRNSKTAEAHWITTPNQLLRIWNDGKILYTLRLTINAECQLQLHNFPMDEHSCPLIFSSYGYPKEEMIYRWRKNSVEAADQKSWRLYQFDFMGLRNTTEIVTTSAGDYVVMTIYFELSRRMGYFTIQTYIPCILTVVLSWVSFWIKKDATPARTALGITTVLTMTTLSTIARKSLPRVSYVTAMDLFVTVCFLFVFAALMEYATLNYYSSCRKPTTTKKTTSLLHPDSSRWIPERISLQAPSNYSLLDMRPPPTAMITLNNSVYWQEFEDTCVYECLDGKDCQSFFCCYEECKSGSWRKGRIHIDILELDSYSRVFFPTSFLLFNLVYWVGYLYL.

An N-terminal signal peptide occupies residues 1–17 (MAPKLLLLLCLFSGLHA). The Extracellular segment spans residues 18-256 (RSRKVEEDEY…FELSRRMGYF (239 aa)). N-linked (GlcNAc...) asparagine glycosylation occurs at Asn-110. An intrachain disulfide couples Cys-171 to Cys-185. Asn-228 carries an N-linked (GlcNAc...) asparagine glycan. Residues 257-277 (TIQTYIPCILTVVLSWVSFWI) form a helical membrane-spanning segment. Residues 278 to 283 (KKDATP) are Cytoplasmic-facing. Residues 284 to 303 (ARTALGITTVLTMTTLSTIA) form a helical membrane-spanning segment. Over 304–311 (RKSLPRVS) the chain is Extracellular. A helical membrane pass occupies residues 312–332 (YVTAMDLFVTVCFLFVFAALM). Residues 333 to 446 (EYATLNYYSS…DILELDSYSR (114 aa)) are Cytoplasmic-facing. A helical membrane pass occupies residues 447 to 467 (VFFPTSFLLFNLVYWVGYLYL).

Belongs to the ligand-gated ion channel (TC 1.A.9) family. Gamma-aminobutyric acid receptor (TC 1.A.9.5) subfamily. GABRG3 sub-subfamily. As to quaternary structure, heteropentamer, formed by a combination of alpha (GABRA1-6), beta (GABRB1-3), gamma (GABRG1-3), delta (GABRD), epsilon (GABRE), rho (GABRR1-3), pi (GABRP) and theta (GABRQ) chains, each subunit exhibiting distinct physiological and pharmacological properties. Post-translationally, may be palmitoylated. Expressed in brain.

It is found in the postsynaptic cell membrane. Its subcellular location is the cell membrane. The enzyme catalyses chloride(in) = chloride(out). Functionally, gamma subunit of the heteropentameric ligand-gated chloride channel gated by gamma-aminobutyric acid (GABA), a major inhibitory neurotransmitter in the brain. GABA-gated chloride channels, also named GABA(A) receptors (GABAAR), consist of five subunits arranged around a central pore and contain GABA active binding site(s) located at the alpha and beta subunit interface(s). When activated by GABA, GABAARs selectively allow the flow of chloride across the cell membrane down their electrochemical gradient. This Homo sapiens (Human) protein is Gamma-aminobutyric acid receptor subunit gamma-3.